The sequence spans 310 residues: Methionyl-tRNA formyltransferase (310 aa).

112-115 (SLLP) contacts (6S)-5,6,7,8-tetrahydrofolate.

This sequence belongs to the Fmt family.

The enzyme catalyses L-methionyl-tRNA(fMet) + (6R)-10-formyltetrahydrofolate = N-formyl-L-methionyl-tRNA(fMet) + (6S)-5,6,7,8-tetrahydrofolate + H(+). Its function is as follows. Attaches a formyl group to the free amino group of methionyl-tRNA(fMet). The formyl group appears to play a dual role in the initiator identity of N-formylmethionyl-tRNA by promoting its recognition by IF2 and preventing the misappropriation of this tRNA by the elongation apparatus. This Pelagibacter ubique (strain HTCC1062) protein is Methionyl-tRNA formyltransferase.